Here is a 266-residue protein sequence, read N- to C-terminus: tRNA pseudouridine synthase A (266 aa).

Catalysis depends on aspartate 52, which acts as the Nucleophile. Tyrosine 113 is a substrate binding site.

The protein belongs to the tRNA pseudouridine synthase TruA family. Homodimer.

It carries out the reaction uridine(38/39/40) in tRNA = pseudouridine(38/39/40) in tRNA. In terms of biological role, formation of pseudouridine at positions 38, 39 and 40 in the anticodon stem and loop of transfer RNAs. This chain is tRNA pseudouridine synthase A, found in Agrobacterium fabrum (strain C58 / ATCC 33970) (Agrobacterium tumefaciens (strain C58)).